Reading from the N-terminus, the 371-residue chain is Protein MxiG (371 aa).

A helical membrane pass occupies residues 127-141 (VFFFFAVIVVLIIIF).

Its subcellular location is the cell inner membrane. It is found in the cell outer membrane. Its function is as follows. Involved in the secretion of the Ipa antigens. Involved in the intracellular dissemination of Shigella. Part of the Mxi-Spa secretion apparatus. In Shigella flexneri, this protein is Protein MxiG (mxiG).